Here is a 287-residue protein sequence, read N- to C-terminus: Pyridoxal kinase PdxY (287 aa).

Substrate contacts are provided by residues serine 10 and 45–46 (TQ). Residues aspartate 112, alanine 144, glutamate 149, lysine 182, and 209–212 (RPLV) contribute to the ATP site. A substrate-binding site is contributed by aspartate 224.

It belongs to the pyridoxine kinase family. PdxY subfamily. As to quaternary structure, homodimer. Mg(2+) is required as a cofactor.

The catalysed reaction is pyridoxal + ATP = pyridoxal 5'-phosphate + ADP + H(+). Its pathway is cofactor metabolism; pyridoxal 5'-phosphate salvage; pyridoxal 5'-phosphate from pyridoxal: step 1/1. Pyridoxal kinase involved in the salvage pathway of pyridoxal 5'-phosphate (PLP). Catalyzes the phosphorylation of pyridoxal to PLP. The protein is Pyridoxal kinase PdxY of Shigella flexneri.